A 405-amino-acid chain; its full sequence is Pyruvate decarboxylase 2 (405 aa).

Residues 232–314 (DSWFNCQKLK…FLINNGGYTI (83 aa)) are thiamine pyrophosphate binding. Residues D282, N309, and G311 each contribute to the Mg(2+) site. E315 is a substrate binding site.

Belongs to the TPP enzyme family. As to quaternary structure, homotetramer. A metal cation serves as cofactor. Requires thiamine diphosphate as cofactor.

It catalyses the reaction a 2-oxocarboxylate + H(+) = an aldehyde + CO2. This Pisum sativum (Garden pea) protein is Pyruvate decarboxylase 2 (PDC2).